We begin with the raw amino-acid sequence, 101 residues long: Small ribosomal subunit protein uS14A (101 aa).

A disordered region spans residues 31 to 67 (LRRPSSTEAERLAAQRELRRQPRDASPTRVRNRDQID). Residues 38 to 53 (EAERLAAQRELRRQPR) show a composition bias toward basic and acidic residues.

The protein belongs to the universal ribosomal protein uS14 family. Part of the 30S ribosomal subunit. Contacts proteins S3 and S10.

In terms of biological role, binds 16S rRNA, required for the assembly of 30S particles and may also be responsible for determining the conformation of the 16S rRNA at the A site. This is Small ribosomal subunit protein uS14A from Streptomyces coelicolor (strain ATCC BAA-471 / A3(2) / M145).